The following is a 159-amino-acid chain: Ribosomal RNA large subunit methyltransferase H (159 aa).

Residues Leu-76, Gly-108, and 127 to 132 contribute to the S-adenosyl-L-methionine site; that span reads FSKMTF.

The protein belongs to the RNA methyltransferase RlmH family. Homodimer.

The protein resides in the cytoplasm. The catalysed reaction is pseudouridine(1915) in 23S rRNA + S-adenosyl-L-methionine = N(3)-methylpseudouridine(1915) in 23S rRNA + S-adenosyl-L-homocysteine + H(+). Functionally, specifically methylates the pseudouridine at position 1915 (m3Psi1915) in 23S rRNA. This is Ribosomal RNA large subunit methyltransferase H from Clostridium botulinum (strain Okra / Type B1).